Reading from the N-terminus, the 122-residue chain is Small ribosomal subunit protein uS13 (122 aa).

The disordered stretch occupies residues 96 to 122 (LPCRGQRTHTNARTRKGPRKPIAGKKK).

Belongs to the universal ribosomal protein uS13 family. Part of the 30S ribosomal subunit. Forms a loose heterodimer with protein S19. Forms two bridges to the 50S subunit in the 70S ribosome.

In terms of biological role, located at the top of the head of the 30S subunit, it contacts several helices of the 16S rRNA. In the 70S ribosome it contacts the 23S rRNA (bridge B1a) and protein L5 of the 50S subunit (bridge B1b), connecting the 2 subunits; these bridges are implicated in subunit movement. Contacts the tRNAs in the A and P-sites. The protein is Small ribosomal subunit protein uS13 of Magnetococcus marinus (strain ATCC BAA-1437 / JCM 17883 / MC-1).